Here is a 203-residue protein sequence, read N- to C-terminus: Thymidylate kinase (203 aa).

14–21 (GGEGIGKS) contacts ATP.

This sequence belongs to the thymidylate kinase family.

It carries out the reaction dTMP + ATP = dTDP + ADP. Its function is as follows. Phosphorylation of dTMP to form dTDP in both de novo and salvage pathways of dTTP synthesis. The sequence is that of Thymidylate kinase from Rickettsia africae (strain ESF-5).